The sequence spans 442 residues: Putative mannan endo-1,6-alpha-mannosidase C1198.07c (442 aa).

Residues 1–19 form the signal peptide; that stretch reads MRYLSFFFEFFFLFSFAFA. The Lumenal portion of the chain corresponds to 20-421; the sequence is FDFDVTSDDS…TPATKSDKGW (402 aa). 7 N-linked (GlcNAc...) asparagine glycosylation sites follow: N75, N124, N193, N229, N254, N257, and N356. The helical transmembrane segment at 422–442 threads the bilayer; the sequence is AGFLTFAFSFVFLLFSIWLYF.

It belongs to the glycosyl hydrolase 76 family.

The protein localises to the endoplasmic reticulum membrane. It carries out the reaction Random hydrolysis of (1-&gt;6)-alpha-D-mannosidic linkages in unbranched (1-&gt;6)-mannans.. The polypeptide is Putative mannan endo-1,6-alpha-mannosidase C1198.07c (Schizosaccharomyces pombe (strain 972 / ATCC 24843) (Fission yeast)).